A 226-amino-acid chain; its full sequence is Thiamine-phosphate synthase (226 aa).

4-amino-2-methyl-5-(diphosphooxymethyl)pyrimidine contacts are provided by residues Gln46–Lys50 and Asp83. Mg(2+)-binding residues include Asp84 and Asp103. Ser122 contacts 4-amino-2-methyl-5-(diphosphooxymethyl)pyrimidine. Thr149–Ser151 contacts 2-[(2R,5Z)-2-carboxy-4-methylthiazol-5(2H)-ylidene]ethyl phosphate. Residue Lys152 participates in 4-amino-2-methyl-5-(diphosphooxymethyl)pyrimidine binding. 2-[(2R,5Z)-2-carboxy-4-methylthiazol-5(2H)-ylidene]ethyl phosphate-binding positions include Gly181 and Ile201–Thr202.

This sequence belongs to the thiamine-phosphate synthase family. It depends on Mg(2+) as a cofactor.

The enzyme catalyses 2-[(2R,5Z)-2-carboxy-4-methylthiazol-5(2H)-ylidene]ethyl phosphate + 4-amino-2-methyl-5-(diphosphooxymethyl)pyrimidine + 2 H(+) = thiamine phosphate + CO2 + diphosphate. It catalyses the reaction 2-(2-carboxy-4-methylthiazol-5-yl)ethyl phosphate + 4-amino-2-methyl-5-(diphosphooxymethyl)pyrimidine + 2 H(+) = thiamine phosphate + CO2 + diphosphate. It carries out the reaction 4-methyl-5-(2-phosphooxyethyl)-thiazole + 4-amino-2-methyl-5-(diphosphooxymethyl)pyrimidine + H(+) = thiamine phosphate + diphosphate. It functions in the pathway cofactor biosynthesis; thiamine diphosphate biosynthesis; thiamine phosphate from 4-amino-2-methyl-5-diphosphomethylpyrimidine and 4-methyl-5-(2-phosphoethyl)-thiazole: step 1/1. In terms of biological role, condenses 4-methyl-5-(beta-hydroxyethyl)thiazole monophosphate (THZ-P) and 2-methyl-4-amino-5-hydroxymethyl pyrimidine pyrophosphate (HMP-PP) to form thiamine monophosphate (TMP). This is Thiamine-phosphate synthase from Haemophilus influenzae (strain ATCC 51907 / DSM 11121 / KW20 / Rd).